The following is a 114-amino-acid chain: Iron-sulfur cluster insertion protein ErpA (114 aa).

The iron-sulfur cluster site is built by C42, C106, and C108.

Belongs to the HesB/IscA family. Homodimer. Iron-sulfur cluster serves as cofactor.

Functionally, required for insertion of 4Fe-4S clusters for at least IspG. The sequence is that of Iron-sulfur cluster insertion protein ErpA from Cronobacter sakazakii (strain ATCC BAA-894) (Enterobacter sakazakii).